The sequence spans 863 residues: Scm-like with four MBT domains protein 1 (863 aa).

4 MBT repeats span residues 20 to 120 (FSWE…LEAP), 128 to 232 (SDWS…LQPP), 242 to 346 (ADWQ…INPP), and 354 to 451 (FDWA…LSTP). Residues 638-773 (KKKNKRIGRP…SDGENKPPSP (136 aa)) are disordered. A compositionally biased stretch (basic residues) spans 660–679 (KTSKRRKRRKNIFVHKKKRS). Polar residues predominate over residues 680 to 691 (SASVDNTPVGSP). Positions 696-710 (GEDEDDADDGDDDSL) are enriched in acidic residues. 2 positions are modified to phosphoserine: S764 and S772. The 69-residue stretch at 793 to 861 (WSVADVVRFI…RIKFAFYEQF (69 aa)) folds into the SAM domain.

In terms of assembly, interacts with MYOD1. Component of the SLC (SFMBT1-LSD1-CoREST) corepressor complex, which also contains KDM1A/LSD1 and RCOR1/CoREST. Interacts with KDM1A/LSD1 and RCOR1/CoREST. Interacts with MYOD1. Interacts with L3MBTL3. In terms of tissue distribution, highly expressed in the testis, low expression was detected in brain, kidney, heart and lung.

The protein resides in the nucleus. Its function is as follows. Histone-binding protein, which is part of various corepressor complexes. Mediates the recruitment of corepressor complexes to target genes, followed by chromatin compaction and repression of transcription. Plays a role during myogenesis: required for the maintenance of undifferentiated states of myogenic progenitor cells via interaction with MYOD1. Interaction with MYOD1 leads to the recruitment of associated corepressors and silencing of MYOD1 target genes. Part of the SLC complex in germ cells, where it may play a role during spermatogenesis. The polypeptide is Scm-like with four MBT domains protein 1 (Sfmbt1) (Rattus norvegicus (Rat)).